The sequence spans 446 residues: Oxysterols receptor LXR-beta (446 aa).

The interval 1-69 is disordered; it reads MSSPTSSLDT…PERKRKKGPA (69 aa). A transactivation AF-1; required for ligand-independent transactivation function region spans residues 1-76; that stretch reads MSSPTSSLDT…GPAPKMLGHE (76 aa). Residues 17 to 28 show a composition bias toward low complexity; it reads SPQPSTSATSPT. A DNA-binding region (nuclear receptor) is located at residues 75–152; sequence HELCRVCGDK…AGMREQCVLS (78 aa). 2 consecutive NR C4-type zinc fingers follow at residues 78 to 98 and 116 to 140; these read CRVCGDKASGFHYNVLSCEGC and CRGSGTCQMDAFMRRKCQLCRLRKC. Positions 159–201 are disordered; that stretch reads KRIQKQQQQQPPPPSEPAASSSGRPAASPGTSEASSQGSGEGE. Residues 175–196 are compositionally biased toward low complexity; the sequence is PAASSSGRPAASPGTSEASSQG. The segment at 205-446 is transactivation AF-2; required for ligand-dependent transactivation function; mediates interaction with CCAR2; the sequence is LTAAQELMIQ…LLSEIWDVHE (242 aa). One can recognise an NR LBD domain in the interval 208–446; sequence AQELMIQQLV…LLSEIWDVHE (239 aa). Residues lysine 395 and lysine 433 each participate in a glycyl lysine isopeptide (Lys-Gly) (interchain with G-Cter in SUMO2) cross-link.

The protein belongs to the nuclear hormone receptor family. NR1 subfamily. As to quaternary structure, forms a heterodimer with RXR. Interacts with CCAR2 (via N-terminus) in a ligand-independent manner. Interacts (when sumoylated) with GPS2; interaction with GPS2 onto hepatic acute phase protein promoters prevents N-Cor corepressor complex dissociation. Interacts with ABCA12 and ABCA1; this interaction is required for ABCA1 localization to the cell surface and is necessary for its normal activity and stability. Post-translationally, sumoylated by SUMO2 at Lys-395 and Lys-433 during the hepatic acute phase response, leading to promote interaction with GPS2 and prevent N-Cor corepressor complex dissociation. In terms of tissue distribution, ubiquitous.

The protein localises to the nucleus. In terms of biological role, nuclear receptor that exhibits a ligand-dependent transcriptional activation activity. Binds preferentially to double-stranded oligonucleotide direct repeats having the consensus half-site sequence 5'-AGGTCA-3' and 4-nt spacing (DR-4). Regulates cholesterol uptake through MYLIP-dependent ubiquitination of LDLR, VLDLR and LRP8; DLDLR and LRP8. Interplays functionally with RORA for the regulation of genes involved in liver metabolism. Induces LPCAT3-dependent phospholipid remodeling in endoplasmic reticulum (ER) membranes of hepatocytes, driving SREBF1 processing and lipogenesis. Via LPCAT3, triggers the incorporation of arachidonate into phosphatidylcholines of ER membranes, increasing membrane dynamics and enabling triacylglycerols transfer to nascent very low-density lipoprotein (VLDL) particles. Via LPCAT3 also counteracts lipid-induced ER stress response and inflammation, likely by modulating SRC kinase membrane compartmentalization and limiting the synthesis of lipid inflammatory mediators. Plays an anti-inflammatory role during the hepatic acute phase response by acting as a corepressor: inhibits the hepatic acute phase response by preventing dissociation of the N-Cor corepressor complex. In Mus musculus (Mouse), this protein is Oxysterols receptor LXR-beta (Nr1h2).